Reading from the N-terminus, the 422-residue chain is Tyrosine--tRNA ligase (422 aa).

L-tyrosine is bound at residue Y34. The short motif at 39–48 (PTEDSLHVGH) is the 'HIGH' region element. Residues Y172 and Q176 each contribute to the L-tyrosine site. Positions 232–236 (KFGKT) match the 'KMSKS' region motif. K235 is an ATP binding site. Residues 354-412 (KDLQEALVLSSLAQSRTQAKNMIISNSISINTKKIVNKNYIIDDNDKLFNQFTLLSRGK) form the S4 RNA-binding domain.

It belongs to the class-I aminoacyl-tRNA synthetase family. TyrS type 1 subfamily. As to quaternary structure, homodimer.

The protein localises to the cytoplasm. It carries out the reaction tRNA(Tyr) + L-tyrosine + ATP = L-tyrosyl-tRNA(Tyr) + AMP + diphosphate + H(+). Catalyzes the attachment of tyrosine to tRNA(Tyr) in a two-step reaction: tyrosine is first activated by ATP to form Tyr-AMP and then transferred to the acceptor end of tRNA(Tyr). This is Tyrosine--tRNA ligase from Buchnera aphidicola subsp. Schizaphis graminum (strain Sg).